The sequence spans 435 residues: 3-phosphoshikimate 1-carboxyvinyltransferase (435 aa).

Residues lysine 25, serine 26, and arginine 30 each coordinate 3-phosphoshikimate. Residue lysine 25 coordinates phosphoenolpyruvate. Glycine 99 and arginine 130 together coordinate phosphoenolpyruvate. 7 residues coordinate 3-phosphoshikimate: serine 176, serine 177, glutamine 178, serine 204, aspartate 319, asparagine 342, and lysine 346. Glutamine 178 contributes to the phosphoenolpyruvate binding site. Aspartate 319 acts as the Proton acceptor in catalysis. Phosphoenolpyruvate is bound by residues arginine 350, arginine 394, and lysine 419.

This sequence belongs to the EPSP synthase family. As to quaternary structure, monomer.

It is found in the cytoplasm. The enzyme catalyses 3-phosphoshikimate + phosphoenolpyruvate = 5-O-(1-carboxyvinyl)-3-phosphoshikimate + phosphate. It functions in the pathway metabolic intermediate biosynthesis; chorismate biosynthesis; chorismate from D-erythrose 4-phosphate and phosphoenolpyruvate: step 6/7. Functionally, catalyzes the transfer of the enolpyruvyl moiety of phosphoenolpyruvate (PEP) to the 5-hydroxyl of shikimate-3-phosphate (S3P) to produce enolpyruvyl shikimate-3-phosphate and inorganic phosphate. This Haemophilus ducreyi (strain 35000HP / ATCC 700724) protein is 3-phosphoshikimate 1-carboxyvinyltransferase.